Here is a 366-residue protein sequence, read N- to C-terminus: cAMP-dependent protein kinase regulatory subunit (366 aa).

A dimerization and phosphorylation region spans residues 1–121; that stretch reads MSGGNEEDQL…SLESAMRKNL (121 aa). Positions 55–87 are disordered; sequence QRAQEGGNPDAADDDDIIVEPPKRSGGRRTGIS. The Pseudophosphorylation motif motif lies at 82–86; the sequence is RRTGI. Serine 87 carries the post-translational modification Phosphoserine. 3',5'-cyclic AMP contacts are provided by residues 122–239, glutamate 187, arginine 196, 240–366, glutamate 311, and arginine 320; these read LFAH…SKVQ and ILAD…KLMT.

This sequence belongs to the cAMP-dependent kinase regulatory chain family. As to quaternary structure, tetramer, composed of 2 regulatory (R) and 2 catalytic (C) subunits. In the presence of cAMP it dissociates into 2 active monomeric C subunits and an R dimer that binds four cAMP molecules. Post-translationally, the pseudophosphorylation site binds to the substrate-binding region of the catalytic chain but is not phosphorylated. The physiological significance of phosphorylations by other kinases is unclear.

It localises to the cytoplasm. It is found in the cytosol. Controls the rhythmic contraction of enteric muscles probably by regulating G-protein coupled receptor aex-2-mediated calcium influx in GABAergic DVB neurons. The polypeptide is cAMP-dependent protein kinase regulatory subunit (kin-2) (Caenorhabditis elegans).